Reading from the N-terminus, the 678-residue chain is UvrABC system protein B (678 aa).

The Helicase ATP-binding domain occupies 35–422 (EGVSDGLMFQ…ADNVVEQVVR (388 aa)). An ATP-binding site is contributed by 48–55 (GVTGSGKT). The Beta-hairpin signature appears at 101-124 (YYDYYQPEAYVPTRDLFIEKDSSI). The Helicase C-terminal domain occupies 439–605 (QVDDLLGEIH…GVSKAVRELI (167 aa)). Residues 633–668 (AREIRRLEKLMMDHARNLEFEQAAAARDALNALKSR) form the UVR domain.

The protein belongs to the UvrB family. As to quaternary structure, forms a heterotetramer with UvrA during the search for lesions. Interacts with UvrC in an incision complex.

It localises to the cytoplasm. Functionally, the UvrABC repair system catalyzes the recognition and processing of DNA lesions. A damage recognition complex composed of 2 UvrA and 2 UvrB subunits scans DNA for abnormalities. Upon binding of the UvrA(2)B(2) complex to a putative damaged site, the DNA wraps around one UvrB monomer. DNA wrap is dependent on ATP binding by UvrB and probably causes local melting of the DNA helix, facilitating insertion of UvrB beta-hairpin between the DNA strands. Then UvrB probes one DNA strand for the presence of a lesion. If a lesion is found the UvrA subunits dissociate and the UvrB-DNA preincision complex is formed. This complex is subsequently bound by UvrC and the second UvrB is released. If no lesion is found, the DNA wraps around the other UvrB subunit that will check the other stand for damage. This chain is UvrABC system protein B, found in Bordetella pertussis (strain Tohama I / ATCC BAA-589 / NCTC 13251).